The primary structure comprises 426 residues: Serine--tRNA ligase (426 aa).

233–235 (TAE) lines the L-serine pocket. Residue 264-266 (RSE) coordinates ATP. E287 serves as a coordination point for L-serine. 351 to 354 (EISS) serves as a coordination point for ATP. Position 387 (S387) interacts with L-serine.

Belongs to the class-II aminoacyl-tRNA synthetase family. Type-1 seryl-tRNA synthetase subfamily. In terms of assembly, homodimer. The tRNA molecule binds across the dimer.

It localises to the cytoplasm. The enzyme catalyses tRNA(Ser) + L-serine + ATP = L-seryl-tRNA(Ser) + AMP + diphosphate + H(+). The catalysed reaction is tRNA(Sec) + L-serine + ATP = L-seryl-tRNA(Sec) + AMP + diphosphate + H(+). The protein operates within aminoacyl-tRNA biosynthesis; selenocysteinyl-tRNA(Sec) biosynthesis; L-seryl-tRNA(Sec) from L-serine and tRNA(Sec): step 1/1. Functionally, catalyzes the attachment of serine to tRNA(Ser). Is also able to aminoacylate tRNA(Sec) with serine, to form the misacylated tRNA L-seryl-tRNA(Sec), which will be further converted into selenocysteinyl-tRNA(Sec). The polypeptide is Serine--tRNA ligase (Pseudomonas fluorescens (strain Pf0-1)).